A 363-amino-acid polypeptide reads, in one-letter code: Melanoma-associated antigen B16 (363 aa).

The segment at 33-124 is disordered; the sequence is EPCSSPHLMA…PDQSDSTDLP (92 aa). Residues 82–97 show a composition bias toward low complexity; that stretch reads ASTSSDLQHPYDSSSE. One can recognise an MAGE domain in the interval 128–327; it reads VDGKVDFLVN…TVFLSQYEEA (200 aa). Residues 342–363 are disordered; that stretch reads HADSSSTSGESSSDTSSNFSQV.

This is Melanoma-associated antigen B16 (Mageb16) from Mus musculus (Mouse).